A 1629-amino-acid polypeptide reads, in one-letter code: Ferredoxin-dependent glutamate synthase 2, chloroplastic (1629 aa).

The transit peptide at 1 to 107 (MALQSPGATG…LEDIISERGA (107 aa)) directs the protein to the chloroplast. The active-site For GATase activity is cysteine 108. A Glutamine amidotransferase type-2 domain is found at 108-507 (CGVGFIANLE…PGMMISVDLE (400 aa)). An FMN-binding site is contributed by 1186 to 1243 (LAETQKTLIGNGLRERVIIRVDGGFKSGVDVLIAAAMGADEYGFGTLAMIATGCIMAR). Residues cysteine 1239, cysteine 1245, and cysteine 1250 each contribute to the [3Fe-4S] cluster site. The disordered stretch occupies residues 1599 to 1629 (SEEDTPEANSDHILKTTTGDEEQVSSTLAEK).

Belongs to the glutamate synthase family. It depends on [3Fe-4S] cluster as a cofactor. FAD is required as a cofactor. The cofactor is FMN. As to expression, expressed predominantly in roots and slightly in leaves. Low expression in the leaf mesophyll and phloem companion cell-sieve element complex.

Its subcellular location is the plastid. The protein localises to the chloroplast stroma. The catalysed reaction is 2 oxidized [2Fe-2S]-[ferredoxin] + 2 L-glutamate = L-glutamine + 2 reduced [2Fe-2S]-[ferredoxin] + 2-oxoglutarate + 2 H(+). It participates in amino-acid biosynthesis; L-glutamate biosynthesis via GLT pathway; L-glutamate from 2-oxoglutarate and L-glutamine (ferredoxin route): step 1/1. The protein operates within energy metabolism; nitrogen metabolism. In terms of biological role, may play a role in primary nitrogen assimilation in roots. Could supply a constitutive level of glutamate to maintain a basal level of protein synthesis. The chain is Ferredoxin-dependent glutamate synthase 2, chloroplastic (GLU2) from Arabidopsis thaliana (Mouse-ear cress).